The following is a 526-amino-acid chain: Dolichyl pyrophosphate Glc1Man9GlcNAc2 alpha-1,3-glucosyltransferase (526 aa).

Transmembrane regions (helical) follow at residues 4-24 (FGIA…VTLL), 103-122 (LLFQ…YAVH), 143-163 (FILS…HIHF), 188-208 (GAFL…VAPA), 238-258 (LISL…PFLA), 334-354 (PLAT…CLWC), 368-388 (LCAL…ILLA), 389-409 (VLPM…FLIL), 427-449 (LPIK…KTLF), 461-481 (TFYL…FPFT), and 488-508 (PFIP…YAWL).

Belongs to the ALG6/ALG8 glucosyltransferase family.

It is found in the endoplasmic reticulum membrane. The enzyme catalyses an alpha-D-Glc-(1-&gt;3)-alpha-D-Man-(1-&gt;2)-alpha-D-Man-(1-&gt;2)-alpha-D-Man-(1-&gt;3)-[alpha-D-Man-(1-&gt;2)-alpha-D-Man-(1-&gt;3)-[alpha-D-Man-(1-&gt;2)-alpha-D-Man-(1-&gt;6)]-alpha-D-Man-(1-&gt;6)]-beta-D-Man-(1-&gt;4)-beta-D-GlcNAc-(1-&gt;4)-alpha-D-GlcNAc-diphospho-di-trans,poly-cis-dolichol + a di-trans,poly-cis-dolichyl beta-D-glucosyl phosphate = an alpha-D-Glc-(1-&gt;3)-alpha-D-Glc-(1-&gt;3)-alpha-D-Man-(1-&gt;2)-alpha-D-Man-(1-&gt;2)-alpha-D-Man-(1-&gt;3)-[alpha-D-Man-(1-&gt;2)-alpha-D-Man-(1-&gt;3)-[alpha-D-Man-(1-&gt;2)-alpha-D-Man-(1-&gt;6)]-alpha-D-Man-(1-&gt;6)]-beta-D-Man-(1-&gt;4)-beta-D-GlcNAc-(1-&gt;4)-alpha-D-GlcNAc-diphospho-di-trans,poly-cis-dolichol + a di-trans,poly-cis-dolichyl phosphate + H(+). Its pathway is protein modification; protein glycosylation. Functionally, dolichyl pyrophosphate Glc1Man9GlcNAc2 alpha-1,3-glucosyltransferase that operates in the biosynthetic pathway of dolichol-linked oligosaccharides, the glycan precursors employed in protein asparagine (N)-glycosylation. The assembly of dolichol-linked oligosaccharides begins on the cytosolic side of the endoplasmic reticulum membrane and finishes in its lumen. The sequential addition of sugars to dolichol pyrophosphate produces dolichol-linked oligosaccharides containing fourteen sugars, including two GlcNAcs, nine mannoses and three glucoses. Once assembled, the oligosaccharide is transferred from the lipid to nascent proteins by oligosaccharyltransferases. In the lumen of the endoplasmic reticulum, adds the second glucose residue from dolichyl phosphate glucose (Dol-P-Glc) onto the lipid-linked oligosaccharide intermediate Glc(1)Man(9)GlcNAc(2)-PP-Dol to produce Glc(2)Man(9)GlcNAc(2)-PP-Dol. Glc(2)Man(9)GlcNAc(2)-PP-Dol is a substrate for ALG10, the following enzyme in the biosynthetic pathway. Required for PKD1/Polycystin-1 maturation and localization to the plasma membrane of the primary cilia. The sequence is that of Dolichyl pyrophosphate Glc1Man9GlcNAc2 alpha-1,3-glucosyltransferase from Bos taurus (Bovine).